The sequence spans 94 residues: ESAT-6-like protein EsxI (94 aa).

Belongs to the WXG100 family. ESAT-6 subfamily.

It localises to the secreted. This is ESAT-6-like protein EsxI from Mycobacterium tuberculosis (strain ATCC 25618 / H37Rv).